The primary structure comprises 714 residues: Testis-expressed protein 13D (714 aa).

Disordered stretches follow at residues 300–419 and 431–675; these read GSFP…GCSD and RRCK…PASF. 2 stretches are compositionally biased toward basic and acidic residues: residues 307-320 and 366-378; these read SRSH…ERSQ and GNRE…EGPK. Positions 379–392 are enriched in basic residues; sequence RARRMHTLVFRRSH. A compositionally biased stretch (polar residues) spans 403-416; sequence TVPQGDSRSYSQEG. Basic and acidic residues-rich tracts occupy residues 495 to 505, 557 to 567, and 636 to 646; these read CKPEEGPERPQ and SRSHGVRESPK. The segment at 677-706 adopts a RanBP2-type zinc-finger fold; it reads VPVNWKCPWCKAINFSWRTACYKCKKACVP.

It belongs to the TEX13 family.

This is Testis-expressed protein 13D from Homo sapiens (Human).